The sequence spans 2276 residues: Protein Ycf2 (2276 aa).

Residue Gly-1621–Ser-1628 coordinates ATP.

Belongs to the Ycf2 family.

It is found in the plastid. It localises to the chloroplast stroma. Probable ATPase of unknown function. Its presence in a non-photosynthetic plant (Epifagus virginiana) and experiments in tobacco indicate that it has an essential function which is probably not related to photosynthesis. The sequence is that of Protein Ycf2 from Guizotia abyssinica (Niger).